The sequence spans 175 residues: Bifunctional protein PyrR (175 aa).

Residues 40 to 41, 102 to 110, Arg-135, and Val-159 contribute to the substrate site; these read TR and DDVLYTGRT. Positions 98–110 match the PRPP-binding motif; it reads VVIIDDVLYTGRT.

The protein belongs to the purine/pyrimidine phosphoribosyltransferase family. PyrR subfamily. In terms of assembly, homodimer and homohexamer; in equilibrium.

The enzyme catalyses UMP + diphosphate = 5-phospho-alpha-D-ribose 1-diphosphate + uracil. Its function is as follows. Regulates transcriptional attenuation of the pyrimidine nucleotide (pyr) operon by binding in a uridine-dependent manner to specific sites on pyr mRNA. This disrupts an antiterminator hairpin in the RNA and favors formation of a downstream transcription terminator, leading to a reduced expression of downstream genes. Also displays a weak uracil phosphoribosyltransferase activity which is not physiologically significant. The protein is Bifunctional protein PyrR of Staphylococcus epidermidis (strain ATCC 12228 / FDA PCI 1200).